Reading from the N-terminus, the 512-residue chain is Putative B3 domain-containing protein REM4 (512 aa).

Positions Asn-11–Ser-103 form a DNA-binding region, TF-B3 1. Residues Ser-111–Asp-145 are disordered. A compositionally biased stretch (acidic residues) spans Ser-115–Asp-145. 2 DNA-binding regions (TF-B3) span residues Tyr-169–Asn-265 and Ile-307–Val-403. Residues Ser-408 to Cys-465 are disordered. Composition is skewed to basic and acidic residues over residues Asp-410 to Met-421 and Thr-432 to Val-442.

Its subcellular location is the nucleus. This is Putative B3 domain-containing protein REM4 (REM4) from Arabidopsis thaliana (Mouse-ear cress).